The primary structure comprises 618 residues: Pyranose 2-oxidase (618 aa).

Histidine 170 is modified (tele-8alpha-FAD histidine). Positions 441 and 443 each coordinate substrate. Histidine 540 functions as the Proton acceptor in the catalytic mechanism. Residue asparagine 583 is part of the active site.

The protein belongs to the GMC oxidoreductase family. Homotetramer. It depends on FAD as a cofactor.

The catalysed reaction is D-glucose + O2 = 2-dehydro-D-glucose + H2O2. Its function is as follows. Catalyzes the oxidation of various aldopyranoses and disaccharides on carbon-2 to the corresponding 2-keto sugars concomitant with the reduction of O(2) to H(2)O(2). This is Pyranose 2-oxidase (p2ox) from Lyophyllum shimeji (Hon-shimeji).